The primary structure comprises 603 residues: Phosphogluconate dehydratase (603 aa).

[4Fe-4S] cluster is bound by residues Cys154 and Cys221.

The protein belongs to the IlvD/Edd family. The cofactor is [4Fe-4S] cluster.

The enzyme catalyses 6-phospho-D-gluconate = 2-dehydro-3-deoxy-6-phospho-D-gluconate + H2O. It participates in carbohydrate metabolism; Entner-Doudoroff pathway. In terms of biological role, catalyzes the dehydration of 6-phospho-D-gluconate to 2-dehydro-3-deoxy-6-phospho-D-gluconate. The chain is Phosphogluconate dehydratase from Escherichia coli O157:H7.